A 223-amino-acid polypeptide reads, in one-letter code: Phosphoribosylformylglycinamidine synthase subunit PurQ (223 aa).

A Glutamine amidotransferase type-1 domain is found at 3-223 (FAVLVFPGSN…MVKSWREQHV (221 aa)). C85 (nucleophile) is an active-site residue. Residues H193 and E195 contribute to the active site.

As to quaternary structure, part of the FGAM synthase complex composed of 1 PurL, 1 PurQ and 2 PurS subunits.

It is found in the cytoplasm. It catalyses the reaction N(2)-formyl-N(1)-(5-phospho-beta-D-ribosyl)glycinamide + L-glutamine + ATP + H2O = 2-formamido-N(1)-(5-O-phospho-beta-D-ribosyl)acetamidine + L-glutamate + ADP + phosphate + H(+). The enzyme catalyses L-glutamine + H2O = L-glutamate + NH4(+). It functions in the pathway purine metabolism; IMP biosynthesis via de novo pathway; 5-amino-1-(5-phospho-D-ribosyl)imidazole from N(2)-formyl-N(1)-(5-phospho-D-ribosyl)glycinamide: step 1/2. Part of the phosphoribosylformylglycinamidine synthase complex involved in the purines biosynthetic pathway. Catalyzes the ATP-dependent conversion of formylglycinamide ribonucleotide (FGAR) and glutamine to yield formylglycinamidine ribonucleotide (FGAM) and glutamate. The FGAM synthase complex is composed of three subunits. PurQ produces an ammonia molecule by converting glutamine to glutamate. PurL transfers the ammonia molecule to FGAR to form FGAM in an ATP-dependent manner. PurS interacts with PurQ and PurL and is thought to assist in the transfer of the ammonia molecule from PurQ to PurL. This chain is Phosphoribosylformylglycinamidine synthase subunit PurQ, found in Staphylococcus aureus (strain MRSA252).